Here is a 473-residue protein sequence, read N- to C-terminus: Glutamate--tRNA ligase 1 (473 aa).

The 'HIGH' region signature appears at P23–G33. A 'KMSKS' region motif is present at residues K252–R256. K255 provides a ligand contact to ATP.

It belongs to the class-I aminoacyl-tRNA synthetase family. Glutamate--tRNA ligase type 1 subfamily. Monomer.

It is found in the cytoplasm. It catalyses the reaction tRNA(Glu) + L-glutamate + ATP = L-glutamyl-tRNA(Glu) + AMP + diphosphate. Its function is as follows. Catalyzes the attachment of glutamate to tRNA(Glu) in a two-step reaction: glutamate is first activated by ATP to form Glu-AMP and then transferred to the acceptor end of tRNA(Glu). In Granulibacter bethesdensis (strain ATCC BAA-1260 / CGDNIH1), this protein is Glutamate--tRNA ligase 1.